The primary structure comprises 510 residues: NAD(P)H-quinone oxidoreductase subunit 2 B, chloroplastic (510 aa).

14 consecutive transmembrane segments (helical) span residues 31–51 (FIFPECILIFGLILLLMIDLT), 59–79 (WFYFISSTSLVISITALLFRW), 99–119 (IFQFLILLCSTLCIPLSVEYI), 124–144 (MAITEFLLFVLTATLGGMFLC), 149–169 (LITIFVALECFSLCSYLLSGY), 184–204 (LLMGGASSSILVYGFSWLYGL), 229–249 (ISIALIFITVGLGFKLSLAPF), 261–281 (PTPVVAFLSVTSKVAALALAT), 295–315 (WHLLLEILAILSMILGNLLAI), 323–343 (MLAYSSIGQIGYVIIGIIVGD), 354–374 (YMLFYISMNLGTFACIVLFGL), 395–415 (ALSLALCLLSLGGLPPLAGFF), 418–438 (LYLFWCGWQAGLYFLVSIGLL), and 484–504 (MTVCVIASTILGISMNPILAI).

This sequence belongs to the complex I subunit 2 family. In terms of assembly, NDH is composed of at least 16 different subunits, 5 of which are encoded in the nucleus.

It localises to the plastid. The protein localises to the chloroplast thylakoid membrane. It catalyses the reaction a plastoquinone + NADH + (n+1) H(+)(in) = a plastoquinol + NAD(+) + n H(+)(out). It carries out the reaction a plastoquinone + NADPH + (n+1) H(+)(in) = a plastoquinol + NADP(+) + n H(+)(out). NDH shuttles electrons from NAD(P)H:plastoquinone, via FMN and iron-sulfur (Fe-S) centers, to quinones in the photosynthetic chain and possibly in a chloroplast respiratory chain. The immediate electron acceptor for the enzyme in this species is believed to be plastoquinone. Couples the redox reaction to proton translocation, and thus conserves the redox energy in a proton gradient. The chain is NAD(P)H-quinone oxidoreductase subunit 2 B, chloroplastic from Hordeum vulgare (Barley).